The chain runs to 943 residues: Translation initiation factor IF-2 (943 aa).

The tract at residues 30–357 (SVKSHSSSVE…KPVTERKFHE (328 aa)) is disordered. Composition is skewed to basic and acidic residues over residues 69–82 (PKEE…DKAS), 112–137 (FKAE…DNRN), 145–155 (QGKRHNNDRRN), 163–196 (DHNK…RDNA), and 224–253 (RQSE…EKQQ). The segment covering 254 to 266 (VKVAVQKAAAETK) has biased composition (low complexity). The span at 296-309 (KSRDNRRVNEDGPK) shows a compositional bias: basic and acidic residues. Over residues 313–332 (NNKWNNQNQVRNQRNSNWNK) the composition is skewed to low complexity. Positions 445 to 614 (ERAPVVTIMG…LLVAEVEELK (170 aa)) constitute a tr-type G domain. The segment at 454-461 (GHVDHGKT) is G1. A GTP-binding site is contributed by 454–461 (GHVDHGKT). Residues 479 to 483 (GITQH) are G2. A G3 region spans residues 500-503 (DTPG). GTP-binding positions include 500-504 (DTPGH) and 554-557 (NKID). The tract at residues 554–557 (NKID) is G4. Residues 590 to 592 (SAK) are G5.

It belongs to the TRAFAC class translation factor GTPase superfamily. Classic translation factor GTPase family. IF-2 subfamily.

It localises to the cytoplasm. Its function is as follows. One of the essential components for the initiation of protein synthesis. Protects formylmethionyl-tRNA from spontaneous hydrolysis and promotes its binding to the 30S ribosomal subunits. Also involved in the hydrolysis of GTP during the formation of the 70S ribosomal complex. The chain is Translation initiation factor IF-2 from Streptococcus thermophilus (strain ATCC BAA-250 / LMG 18311).